A 208-amino-acid polypeptide reads, in one-letter code: Uracil phosphoribosyltransferase (208 aa).

5-phospho-alpha-D-ribose 1-diphosphate is bound by residues arginine 78, arginine 103, and aspartate 130–serine 138. Residues isoleucine 193 and glycine 198 to alanine 200 each bind uracil. Aspartate 199 is a 5-phospho-alpha-D-ribose 1-diphosphate binding site.

The protein belongs to the UPRTase family. It depends on Mg(2+) as a cofactor.

The catalysed reaction is UMP + diphosphate = 5-phospho-alpha-D-ribose 1-diphosphate + uracil. The protein operates within pyrimidine metabolism; UMP biosynthesis via salvage pathway; UMP from uracil: step 1/1. Allosterically activated by GTP. In terms of biological role, catalyzes the conversion of uracil and 5-phospho-alpha-D-ribose 1-diphosphate (PRPP) to UMP and diphosphate. This is Uracil phosphoribosyltransferase from Colwellia psychrerythraea (strain 34H / ATCC BAA-681) (Vibrio psychroerythus).